The sequence spans 262 residues: 3-methyl-2-oxobutanoate hydroxymethyltransferase (262 aa).

The Mg(2+) site is built by D31 and D70. 3-methyl-2-oxobutanoate is bound by residues 31-32 (DS), D70, and K99. E101 contacts Mg(2+). E168 (proton acceptor) is an active-site residue.

It belongs to the PanB family. As to quaternary structure, homodecamer; pentamer of dimers. Mg(2+) serves as cofactor.

It is found in the cytoplasm. The catalysed reaction is 3-methyl-2-oxobutanoate + (6R)-5,10-methylene-5,6,7,8-tetrahydrofolate + H2O = 2-dehydropantoate + (6S)-5,6,7,8-tetrahydrofolate. Its pathway is cofactor biosynthesis; coenzyme A biosynthesis. Catalyzes the reversible reaction in which hydroxymethyl group from 5,10-methylenetetrahydrofolate is transferred onto alpha-ketoisovalerate to form ketopantoate. This chain is 3-methyl-2-oxobutanoate hydroxymethyltransferase, found in Cenarchaeum symbiosum (strain A).